A 450-amino-acid chain; its full sequence is Guanine deaminase (450 aa).

The Zn(2+) site is built by histidine 88 and histidine 90. Residues 90–93 (HAPQ), 218–219 (RF), 245–248 (HLSE), and aspartate 335 each bind substrate. 2 residues coordinate Zn(2+): histidine 245 and aspartate 335.

It belongs to the metallo-dependent hydrolases superfamily. ATZ/TRZ family. The cofactor is Zn(2+).

The enzyme catalyses guanine + H2O + H(+) = xanthine + NH4(+). Its pathway is purine metabolism; guanine degradation; xanthine from guanine: step 1/1. In terms of biological role, catalyzes the hydrolytic deamination of guanine, producing xanthine and ammonia. This is Guanine deaminase (guaD) from Dictyostelium discoideum (Social amoeba).